Consider the following 603-residue polypeptide: MAVARKIRTLLTVNILVFVGIVLFSVYCRLQGRSQELVRIVSGDRRVRSRHAKVGTLGDREAILQRLDHLEEVVYNQLNGLAKPIGLVEGPGGLGQGGLAATLRDDGQEAEGKYEEYGYNAQLSDRISLDRSIPDYRPRKCRQMSYAQDLPQVSVVFIFVNEALSVILRSVHSVVNHTPSQLLKEVILVDDNSDNVELKFNLDQYVNKRYPGLVKIVRNSRREGLIRARLQGWKAATAPVVGFFDAHVEFNTGWAEPALSRIREDRRRIVLPAIDNIKYSTFEVQQYANAAHGYNWGLRCMYIIPPQDWLDRGDESAPIRTPAMIGCSFVVDREYFGDIGLLDPGMEVYGGENVELGMRVWQCGGSMEVLPCSRVAHIERTRKPYNNDIDYYAKRNALRAAEVWMDDFKSHVYMAWNIPMSNPGVDFGDVSERLALRQRLKCRSFKWYLENVYPEMRVYNNTLTYGEVRNSKASAYCLDQGAEDGDRAILYPCHGMSSQLVRYSADGLLQLGPLGSTAFLPDSKCLVDDGTGRMPTLKKCEDVARPTQRLWDFTQSGPIVSRATGRCLEVEMSKDANFGLRLVVQRCSGQKWMIRNWIKHARH.

The Cytoplasmic portion of the chain corresponds to 1 to 6 (MAVARK). Residues 7–29 (IRTLLTVNILVFVGIVLFSVYCR) traverse the membrane as a helical; Signal-anchor for type II membrane protein segment. At 30-603 (LQGRSQELVR…IRNWIKHARH (574 aa)) the chain is on the lumenal side. 2 disulfides stabilise this stretch: Cys141–Cys372 and Cys363–Cys442. The tract at residues 150 to 261 (LPQVSVVFIF…TGWAEPALSR (112 aa)) is catalytic subdomain A. The substrate site is built by Asp191 and Arg222. Mn(2+)-binding residues include Asp245, His247, and His377. Residues 318-380 (PIRTPAMIGC…PCSRVAHIER (63 aa)) are catalytic subdomain B. The substrate site is built by Arg380 and Tyr385. Residue Asn460 is glycosylated (N-linked (GlcNAc...) asparagine). The Ricin B-type lectin domain maps to 464 to 600 (TYGEVRNSKA…KWMIRNWIKH (137 aa)). 3 disulfide bridges follow: Cys477-Cys493, Cys525-Cys540, and Cys567-Cys587.

It belongs to the glycosyltransferase 2 family. GalNAc-T subfamily. The cofactor is Mn(2+). In terms of tissue distribution, specifically expressed in brain. Not expressed in heart, placenta, lung, liver, skeletal muscle, kidney, pancreas, spleen, thymus, prostate, testis, ovary, small intestine, colon and leukocyte. In brain, it is expressed in cerebellum, frontal lobe, temporal lobe, putamen and spinal cord, weakly expressed in cerebral cortex. Not expressed in medulla and occipital pole.

The protein resides in the golgi apparatus membrane. The catalysed reaction is L-seryl-[protein] + UDP-N-acetyl-alpha-D-galactosamine = a 3-O-[N-acetyl-alpha-D-galactosaminyl]-L-seryl-[protein] + UDP + H(+). It catalyses the reaction L-threonyl-[protein] + UDP-N-acetyl-alpha-D-galactosamine = a 3-O-[N-acetyl-alpha-D-galactosaminyl]-L-threonyl-[protein] + UDP + H(+). The protein operates within protein modification; protein glycosylation. Catalyzes the initial reaction in O-linked oligosaccharide biosynthesis, the transfer of an N-acetyl-D-galactosamine residue to a serine or threonine residue on the protein receptor. Does not glycosylate apomucin or SDC3. The polypeptide is Polypeptide N-acetylgalactosaminyltransferase 9 (GALNT9) (Homo sapiens (Human)).